Reading from the N-terminus, the 280-residue chain is Borealin (280 aa).

A compositionally biased stretch (basic residues) spans 140-153 (KVAAKKPSTARRTR). Residues 140-187 (KVAAKKPSTARRTRASVGNVANTSKRTSKRGRATPSASKQAETSLLGY) form a disordered region.

The protein belongs to the borealin family. As to quaternary structure, component of the CPC at least composed of survivin/birc5, incenp, cdca8/borealin and/or cdca9/dasra-A, and aurkb/aurora-B. Interacts with incenp (via N-terminus).

The protein localises to the nucleus. Its subcellular location is the chromosome. It is found in the centromere. It localises to the cytoplasm. The protein resides in the cytoskeleton. The protein localises to the spindle. Component of the chromosomal passenger complex (CPC), a complex that acts as a key regulator of mitosis. The CPC complex has essential functions at the centromere in ensuring correct chromosome alignment and segregation and is required for chromatin-induced microtubule stabilization and spindle assembly. Contributes to CPC function by facilitating loading of the CPC onto chromosomes. The polypeptide is Borealin (cdca8) (Xenopus laevis (African clawed frog)).